A 164-amino-acid polypeptide reads, in one-letter code: Galectin-3 (164 aa).

Residues 9 to 154 (STVDLSEPLK…FSDVLGVTVL (146 aa)) enclose the Galectin domain. 6 residues coordinate a carbohydrate: Asn45, Arg64, Asn73, Arg81, Glu84, and Asn138.

Homotetramer. Oligomerization is required for carbohydrate binding.

The protein resides in the secreted. It localises to the extracellular space. The protein localises to the extracellular matrix. It is found in the cell wall. Its function is as follows. Binds complex carbohydrates, such as chitooligosaccharides. Does not bind lactose. May play a role in fruiting body formation. The polypeptide is Galectin-3 (Cgl3) (Coprinopsis cinerea (Inky cap fungus)).